Here is a 149-residue protein sequence, read N- to C-terminus: Nucleoside diphosphate kinase (149 aa).

ATP-binding residues include K9, F57, R85, T91, R102, and N112. H115 acts as the Pros-phosphohistidine intermediate in catalysis.

Belongs to the NDK family. Mg(2+) serves as cofactor.

It is found in the cytoplasm. The enzyme catalyses a 2'-deoxyribonucleoside 5'-diphosphate + ATP = a 2'-deoxyribonucleoside 5'-triphosphate + ADP. It catalyses the reaction a ribonucleoside 5'-diphosphate + ATP = a ribonucleoside 5'-triphosphate + ADP. Major role in the synthesis of nucleoside triphosphates other than ATP. The ATP gamma phosphate is transferred to the NDP beta phosphate via a ping-pong mechanism, using a phosphorylated active-site intermediate. The chain is Nucleoside diphosphate kinase from Methanocorpusculum labreanum (strain ATCC 43576 / DSM 4855 / Z).